A 92-amino-acid chain; its full sequence is Small ribosomal subunit protein uS19c (92 aa).

The protein belongs to the universal ribosomal protein uS19 family.

The protein resides in the plastid. Its subcellular location is the chloroplast. Functionally, protein S19 forms a complex with S13 that binds strongly to the 16S ribosomal RNA. The sequence is that of Small ribosomal subunit protein uS19c from Staurastrum punctulatum (Green alga).